Reading from the N-terminus, the 384-residue chain is ATP phosphoribosyltransferase regulatory subunit (384 aa).

This sequence belongs to the class-II aminoacyl-tRNA synthetase family. HisZ subfamily. In terms of assembly, heteromultimer composed of HisG and HisZ subunits.

Its subcellular location is the cytoplasm. The protein operates within amino-acid biosynthesis; L-histidine biosynthesis; L-histidine from 5-phospho-alpha-D-ribose 1-diphosphate: step 1/9. Functionally, required for the first step of histidine biosynthesis. May allow the feedback regulation of ATP phosphoribosyltransferase activity by histidine. This chain is ATP phosphoribosyltransferase regulatory subunit, found in Azoarcus sp. (strain BH72).